The primary structure comprises 166 residues: NAD(P)H-quinone oxidoreductase subunit I, chloroplastic (166 aa).

2 4Fe-4S ferredoxin-type domains span residues 55–84 (GRIH…VDWK) and 95–124 (LNYS…MTEE). Positions 64, 67, 70, 74, 104, 107, 110, and 114 each coordinate [4Fe-4S] cluster.

The protein belongs to the complex I 23 kDa subunit family. NDH is composed of at least 16 different subunits, 5 of which are encoded in the nucleus. Requires [4Fe-4S] cluster as cofactor.

It localises to the plastid. The protein localises to the chloroplast thylakoid membrane. The enzyme catalyses a plastoquinone + NADH + (n+1) H(+)(in) = a plastoquinol + NAD(+) + n H(+)(out). The catalysed reaction is a plastoquinone + NADPH + (n+1) H(+)(in) = a plastoquinol + NADP(+) + n H(+)(out). Its function is as follows. NDH shuttles electrons from NAD(P)H:plastoquinone, via FMN and iron-sulfur (Fe-S) centers, to quinones in the photosynthetic chain and possibly in a chloroplast respiratory chain. The immediate electron acceptor for the enzyme in this species is believed to be plastoquinone. Couples the redox reaction to proton translocation, and thus conserves the redox energy in a proton gradient. The sequence is that of NAD(P)H-quinone oxidoreductase subunit I, chloroplastic from Tridax balbisioides (Coatbuttons).